Consider the following 378-residue polypeptide: 3,6-diketocamphane 1,6-monooxygenase (378 aa).

Residues His10, Ser44, Met76, and 201-209 (TGFSYNSPS) contribute to the FMN site.

It belongs to the bacterial luciferase oxidoreductase family. In terms of assembly, homodimer. Likely forms a loose transient complex with a P.putida flavin reductase that provides the required FMNH(2) to the enzyme.

The enzyme catalyses (1S,4S)-bornane-2,5-dione + FMNH2 + O2 = (1S,4S)-5-oxo-1,2-campholide + FMN + H2O + H(+). Functionally, involved in the degradation and assimilation of (-)-camphor, which allows P.putida strain NCIMB 10007 to grow on this enantiomer of camphor as the sole carbon source. Catalyzes the FMNH(2)-dependent lactonization of 3,6-diketocamphane via a Baeyer-Villiger oxidation to produce the unstable lactone 5-oxo-1,2-campholide with (S,S) configuration, that presumably undergoes spontaneous hydrolysis to form 2-oxo-Delta(3)-4,5,5-trimethylcyclopentenylacetate. Is also able to convert (-)-camphor to the corresponding lactone in vitro. Shows no conversion of (+)-camphor, (+)-fenchone, (-)-fenchone, and (+)-nopinone. Acts on other bicyclic ketones but very poorly on a few 2- and 4-substituted monocyclic ketones. The polypeptide is 3,6-diketocamphane 1,6-monooxygenase (Pseudomonas putida (Arthrobacter siderocapsulatus)).